The chain runs to 503 residues: MSIKAEEISALIKQQLANYQDELTVDEVGTVTYVGDGIARANGLDNALAGELVEFDDGTYGMAQNLESNDVGIIILGSFKGIREGDTVKRTGRIMEVPVGEELIGRVVNPLGQPIDGLGEVKTNKTRPVERKAPGVMERQSVTEPLQTGLKAIDALVPIGRGQRELVIGDRKTGKTSVAIDTIINQKDQDMICIYVAIGQKDSTVRTSVETLRKFGAMDYTIVVSAGPSSPAPLLYLAPYAGAAMGEEFMFNGKHVLIVYDDLSKQADAYRELSLILRRPPGREAYPGDVFYLHSRLLERAAKLSDELGGGSMTALPFIETKAGDVSAYIPTNVISITDGQIFLDSDRFYSGIRPAIDAGTSVSRVGGNAQVKAMKKVAGTLRTDLASYSELESFAQFGSDLDEATQAKLNRGRRTVEVLKQPLHKPLPVEKQVLILYALTHGFLDPVKVDDILPYQDGLFDYFDANHKDLLDEIANTGKLPETEKLDAAIKEYAATFQASEK.

Residue 169–176 (GDRKTGKT) coordinates ATP.

The protein belongs to the ATPase alpha/beta chains family. In terms of assembly, F-type ATPases have 2 components, CF(1) - the catalytic core - and CF(0) - the membrane proton channel. CF(1) has five subunits: alpha(3), beta(3), gamma(1), delta(1), epsilon(1). CF(0) has three main subunits: a(1), b(2) and c(9-12). The alpha and beta chains form an alternating ring which encloses part of the gamma chain. CF(1) is attached to CF(0) by a central stalk formed by the gamma and epsilon chains, while a peripheral stalk is formed by the delta and b chains.

Its subcellular location is the cell membrane. It carries out the reaction ATP + H2O + 4 H(+)(in) = ADP + phosphate + 5 H(+)(out). Produces ATP from ADP in the presence of a proton gradient across the membrane. The alpha chain is a regulatory subunit. The polypeptide is ATP synthase subunit alpha (Ligilactobacillus salivarius (strain UCC118) (Lactobacillus salivarius)).